We begin with the raw amino-acid sequence, 484 residues long: Zinc metalloproteinase-disintegrin stejnitin (484 aa).

The signal sequence occupies residues 1-20 (MIQVLLVTICLAVFPYQGNS). A propeptide spanning residues 21-192 (IILESGNVND…ASQLNLTPDE (172 aa)) is cleaved from the precursor. Residue glutamine 193 is modified to Pyrrolidone carboxylic acid. The 199-residue stretch at 194-392 (RFIELVIVAD…YTSRCLYNGP (199 aa)) folds into the Peptidase M12B domain. Glutamate 197 lines the Ca(2+) pocket. The N-linked (GlcNAc...) asparagine glycan is linked to asparagine 254. Aspartate 281 contacts Ca(2+). 3 disulfides stabilise this stretch: cysteine 305-cysteine 387, cysteine 345-cysteine 369, and cysteine 347-cysteine 352. Zn(2+) contacts are provided by histidine 330, histidine 334, and histidine 340. Positions 387, 390, 402, 405, 409, 412, and 415 each coordinate Ca(2+). The 85-residue stretch at 400–484 (PPVCGNYYVE…GDCPRNPFRA (85 aa)) folds into the Disintegrin domain. 7 disulfide bridges follow: cysteine 403–cysteine 422, cysteine 414–cysteine 432, cysteine 416–cysteine 427, cysteine 426–cysteine 449, cysteine 440–cysteine 446, cysteine 445–cysteine 470, and cysteine 458–cysteine 477. The Cell attachment site signature appears at 462–464 (KGD).

The protein belongs to the venom metalloproteinase (M12B) family. P-II subfamily. P-IIb sub-subfamily. The cofactor is Zn(2+). The N-terminus is blocked. In terms of tissue distribution, expressed by the venom gland.

It localises to the secreted. Snake venom zinc metalloproteinase that inhibits ADP-induced platelet aggregation in human platelet-rich plasma (IC(50) is 175 nM) and cleaves alpha-(FGA) and subsequently the beta-chain (FGG) of bovine fibrinogen, leaving the gamma-chain unaffected. It is also able to inhibit proliferatin of ECV304 cells by inducing apoptosis of these cells. The polypeptide is Zinc metalloproteinase-disintegrin stejnitin (Trimeresurus stejnegeri (Chinese green tree viper)).